The following is a 78-amino-acid chain: Acyl carrier protein (78 aa).

One can recognise a Carrier domain in the interval 2-77 (DELFLRMRAL…DAYEFIKSKV (76 aa)). An O-(pantetheine 4'-phosphoryl)serine modification is found at serine 37.

The protein belongs to the acyl carrier protein (ACP) family. In terms of processing, 4'-phosphopantetheine is transferred from CoA to a specific serine of apo-ACP by AcpS. This modification is essential for activity because fatty acids are bound in thioester linkage to the sulfhydryl of the prosthetic group.

It localises to the cytoplasm. It functions in the pathway lipid metabolism; fatty acid biosynthesis. Functionally, carrier of the growing fatty acid chain in fatty acid biosynthesis. The protein is Acyl carrier protein of Treponema pallidum (strain Nichols).